A 37-amino-acid chain; its full sequence is Photosystem I reaction center subunit VIII (37 aa).

The helical transmembrane segment at 10-30 threads the bilayer; sequence IFVPLVGLVFPAIAMASLSLY.

It belongs to the PsaI family.

The protein resides in the plastid. It is found in the chloroplast thylakoid membrane. May help in the organization of the PsaL subunit. The chain is Photosystem I reaction center subunit VIII from Gossypium barbadense (Sea Island cotton).